The primary structure comprises 449 residues: L-seryl-tRNA(Sec) selenium transferase (449 aa).

K286 is modified (N6-(pyridoxal phosphate)lysine).

It belongs to the SelA family. Pyridoxal 5'-phosphate is required as a cofactor.

The protein resides in the cytoplasm. The enzyme catalyses L-seryl-tRNA(Sec) + selenophosphate + H(+) = L-selenocysteinyl-tRNA(Sec) + phosphate. Its pathway is aminoacyl-tRNA biosynthesis; selenocysteinyl-tRNA(Sec) biosynthesis; selenocysteinyl-tRNA(Sec) from L-seryl-tRNA(Sec) (bacterial route): step 1/1. Converts seryl-tRNA(Sec) to selenocysteinyl-tRNA(Sec) required for selenoprotein biosynthesis. In Sulfurimonas denitrificans (strain ATCC 33889 / DSM 1251) (Thiomicrospira denitrificans (strain ATCC 33889 / DSM 1251)), this protein is L-seryl-tRNA(Sec) selenium transferase.